Reading from the N-terminus, the 120-residue chain is Large ribosomal subunit protein uL18 (120 aa).

This sequence belongs to the universal ribosomal protein uL18 family. In terms of assembly, part of the 50S ribosomal subunit; part of the 5S rRNA/L5/L18/L25 subcomplex. Contacts the 5S and 23S rRNAs.

Its function is as follows. This is one of the proteins that bind and probably mediate the attachment of the 5S RNA into the large ribosomal subunit, where it forms part of the central protuberance. The sequence is that of Large ribosomal subunit protein uL18 from Methylocella silvestris (strain DSM 15510 / CIP 108128 / LMG 27833 / NCIMB 13906 / BL2).